The primary structure comprises 451 residues: Tubulin alpha chain (451 aa).

Residue Gln-11 participates in GTP binding. Lys-40 bears the N6-acetyllysine mark. Residues Glu-71, Gly-144, Thr-145, Thr-179, Asn-206, and Asn-228 each contribute to the GTP site. A Mg(2+)-binding site is contributed by Glu-71. Glu-254 is a catalytic residue.

It belongs to the tubulin family. Dimer of alpha and beta chains. A typical microtubule is a hollow water-filled tube with an outer diameter of 25 nm and an inner diameter of 15 nM. Alpha-beta heterodimers associate head-to-tail to form protofilaments running lengthwise along the microtubule wall with the beta-tubulin subunit facing the microtubule plus end conferring a structural polarity. Microtubules usually have 13 protofilaments but different protofilament numbers can be found in some organisms and specialized cells. Requires Mg(2+) as cofactor. Undergoes a tyrosination/detyrosination cycle, the cyclic removal and re-addition of a C-terminal tyrosine residue by the enzymes tubulin tyrosine carboxypeptidase (TTCP) and tubulin tyrosine ligase (TTL), respectively. Post-translationally, acetylation of alpha chains at Lys-40 stabilizes microtubules and affects affinity and processivity of microtubule motors. This modification has a role in multiple cellular functions, ranging from cell motility, cell cycle progression or cell differentiation to intracellular trafficking and signaling.

The protein localises to the cytoplasm. It localises to the cytoskeleton. The enzyme catalyses GTP + H2O = GDP + phosphate + H(+). Its function is as follows. Tubulin is the major constituent of microtubules, a cylinder consisting of laterally associated linear protofilaments composed of alpha- and beta-tubulin heterodimers. Microtubules grow by the addition of GTP-tubulin dimers to the microtubule end, where a stabilizing cap forms. Below the cap, tubulin dimers are in GDP-bound state, owing to GTPase activity of alpha-tubulin. This Trypanosoma cruzi protein is Tubulin alpha chain.